Consider the following 199-residue polypeptide: Recombination protein RecR (199 aa).

The C4-type zinc finger occupies 56–71; it reads CSICFNWSAEDPCEIC. The Toprim domain maps to 79 to 174; the sequence is STWCVVADVK…GLRMTRLAFG (96 aa).

Belongs to the RecR family.

Functionally, may play a role in DNA repair. It seems to be involved in an RecBC-independent recombinational process of DNA repair. It may act with RecF and RecO. This chain is Recombination protein RecR, found in Synechococcus sp. (strain JA-3-3Ab) (Cyanobacteria bacterium Yellowstone A-Prime).